The chain runs to 1132 residues: Telomerase reverse transcriptase (1132 aa).

An RNA-interacting domain 1 region spans residues 1–230 (MPRAPRCRAV…ARRRGGSASR (230 aa)). The tract at residues 58–197 (VPWDARPPPA…PHASGPRRRL (140 aa)) is GQ motif. Positions 137-141 (WGLLL) are required for regulating specificity for telomeric DNA and for processivity for primer elongation. The interval 210 to 320 (AGVPLGLPAP…SRPPRPWDTP (111 aa)) is disordered. The segment covering 213–234 (PLGLPAPGARRRGGSASRSLPL) has biased composition (low complexity). Positions 222 to 240 (RRRGGSASRSLPLPKRPRR) match the Bipartite nuclear localization signal motif. Ser-227 bears the Phosphoserine; by PKB/AKT1 mark. The interval 231 to 324 (SLPLPKRPRR…RPWDTPCPPV (94 aa)) is linker. Positions 293 to 304 (RHSHPSVGRQHH) are enriched in basic residues. Residues 301–538 (RQHHAGPPST…VPAAEHRLRE (238 aa)) form a required for oligomerization region. Pro residues predominate over residues 310-320 (TSRPPRPWDTP). The tract at residues 325–550 (YAETKHFLYS…LAKFLHWLMS (226 aa)) is RNA-interacting domain 2. Positions 328–333 (TKHFLY) match the TFLY; involved in RNA binding motif. Positions 376–521 (PRRLPRLPQR…MSVRDCAWLR (146 aa)) are QFP motif. The interval 397 to 417 (LGNHAQCPYGVLLKTHCPLRA) is CP motif. Ser-457 bears the Phosphoserine; by DYRK2 mark. Residues 605 to 935 (EVRQHREARP…GLFPWCGLLL (331 aa)) form the Reverse transcriptase domain. The residue at position 707 (Tyr-707) is a Phosphotyrosine; by SRC-type Tyr-kinases. Residues Asp-712, Asp-868, and Asp-869 each contribute to the Mg(2+) site. Positions 914–928 (LGGTAFVQMPAHGLF) are required for oligomerization. The primer grip sequence stretch occupies residues 930-934 (WCGLL). Residues 936-1132 (DTRTLEVQSD…LPSDFKTILD (197 aa)) are CTE.

It belongs to the reverse transcriptase family. Telomerase subfamily. Catalytic component of the telomerase holoenzyme complex composed of one molecule of TERT, one molecule of WRAP53/TCAB1, two molecules of H/ACA ribonucleoprotein complex subunits DKC1, NOP10, NHP2 and GAR1, and a telomerase RNA template component (TERC). The telomerase holoenzyme complex is associated with TEP1, SMG6/EST1A and POT1. The molecular chaperone HSP90/P23 complex is required for correct assembly and stabilization of the active telomerase. Interacts directly with HSP90A and PTGES3. Interacts with HSPA1A; the interaction occurs in the absence of TERC and dissociates once the complex has formed. Interacts with RAN; the interaction promotes nuclear export of TERT. Interacts with XPO1. Interacts with PTPN11; the interaction retains TERT in the nucleus. Interacts with NCL (via RRM1 and C-terminal RRM4/Arg/Gly-rich domains); the interaction is important for nucleolar localization of TERT. Interacts with SMARCA4 (via the bromodomain); the interaction regulates Wnt-mediated signaling. Interacts with MCRS1 (isoform MCRS2); the interaction inhibits in vitro telomerase activity. Interacts with PIF1; the interaction has no effect on the elongation activity of TERT. Interacts with PML; the interaction recruits TERT to PML bodies and inhibits telomerase activity. Interacts with GNL3L. Interacts with isoform 1 and isoform 2 of NVL. Interacts with DHX36. Interacts with ATF7. Phosphorylation at Tyr-707 under oxidative stress leads to translocation of TERT to the cytoplasm and reduces its antiapoptotic activity. Dephosphorylated by SHP2/PTPN11 leading to nuclear retention. Phosphorylation at Ser-227 by the AKT pathway promotes nuclear location. Phosphorylation at the G2/M phase at Ser-457 by DYRK2 promotes ubiquitination by the EDVP complex and degradation. Post-translationally, ubiquitinated by the EDVP complex, a E3 ligase complex following phosphorylation at Ser-457 by DYRK2. Ubiquitinated leads to proteasomal degradation. In terms of processing, (Microbial infection) In case of infection by HIV-1, the EDVP complex is hijacked by HIV-1 via interaction between HIV-1 Vpr and DCAF1/VPRBP, leading to ubiquitination and degradation. Expressed at a high level in thymocyte subpopulations, at an intermediate level in tonsil T-lymphocytes, and at a low to undetectable level in peripheral blood T-lymphocytes.

The protein localises to the nucleus. It is found in the nucleolus. It localises to the nucleoplasm. The protein resides in the chromosome. Its subcellular location is the telomere. The protein localises to the cytoplasm. It is found in the PML body. It catalyses the reaction DNA(n) + a 2'-deoxyribonucleoside 5'-triphosphate = DNA(n+1) + diphosphate. Functionally, telomerase is a ribonucleoprotein enzyme essential for the replication of chromosome termini in most eukaryotes. Active in progenitor and cancer cells. Inactive, or very low activity, in normal somatic cells. Catalytic component of the teleromerase holoenzyme complex whose main activity is the elongation of telomeres by acting as a reverse transcriptase that adds simple sequence repeats to chromosome ends by copying a template sequence within the RNA component of the enzyme. Catalyzes the RNA-dependent extension of 3'-chromosomal termini with the 6-nucleotide telomeric repeat unit, 5'-TTAGGG-3'. The catalytic cycle involves primer binding, primer extension and release of product once the template boundary has been reached or nascent product translocation followed by further extension. More active on substrates containing 2 or 3 telomeric repeats. Telomerase activity is regulated by a number of factors including telomerase complex-associated proteins, chaperones and polypeptide modifiers. Modulates Wnt signaling. Plays important roles in aging and antiapoptosis. This chain is Telomerase reverse transcriptase (TERT), found in Homo sapiens (Human).